The following is a 254-amino-acid chain: Demethylmenaquinone methyltransferase (254 aa).

S-adenosyl-L-methionine is bound by residues threonine 62, aspartate 80, 122 to 123 (DG), and serine 139.

It belongs to the class I-like SAM-binding methyltransferase superfamily. MenG/UbiE family.

It carries out the reaction a 2-demethylmenaquinol + S-adenosyl-L-methionine = a menaquinol + S-adenosyl-L-homocysteine + H(+). It functions in the pathway quinol/quinone metabolism; menaquinone biosynthesis; menaquinol from 1,4-dihydroxy-2-naphthoate: step 2/2. Methyltransferase required for the conversion of demethylmenaquinol (DMKH2) to menaquinol (MKH2). The polypeptide is Demethylmenaquinone methyltransferase (Parafrankia sp. (strain EAN1pec)).